Here is a 130-residue protein sequence, read N- to C-terminus: MELAKERNGPHQKHHGQCQNHCTSPNTVRQNKTNKLLLVKKKGKLVIWRHIVKKMLHIRLVVLWSHYPEQHGHGTNHYEYTNNSIAKLDAQRVSRRRRKKREAERRDYDTYKLLITLCSLLFVGPLFLKV.

Positions 1-28 are disordered; the sequence is MELAKERNGPHQKHHGQCQNHCTSPNTV. Residues 17–28 are compositionally biased toward polar residues; sequence QCQNHCTSPNTV.

This is an uncharacterized protein from Saccharomyces cerevisiae (strain ATCC 204508 / S288c) (Baker's yeast).